The sequence spans 371 residues: Glycerate kinase (371 aa).

It belongs to the glycerate kinase type-1 family.

It carries out the reaction (R)-glycerate + ATP = (2R)-3-phosphoglycerate + ADP + H(+). The protein is Glycerate kinase (glxK) of Neisseria meningitidis serogroup B (strain ATCC BAA-335 / MC58).